Reading from the N-terminus, the 199-residue chain is V-type ATP synthase subunit E (199 aa).

The protein belongs to the V-ATPase E subunit family.

Produces ATP from ADP in the presence of a proton gradient across the membrane. This Borreliella afzelii (strain PKo) (Borrelia afzelii) protein is V-type ATP synthase subunit E.